A 785-amino-acid chain; its full sequence is Solute carrier family 45 member 4 (785 aa).

The interval 1 to 43 (MKMAPQNADSESMQVQELPVPLPDPQKPRDPEAETQEETTSEG) is disordered. 6 helical membrane-spanning segments follow: residues 64 to 84 (EFCYAMETALVTPILLQIGLP), 87 to 107 (YYSLTWFLSPVLGLIFTPLIG), 124 to 144 (ILALCVGVLIGVALFLNGSAI), 156 to 176 (PIGIVLTVLGVVVLDFSADAT), 197 to 217 (LNIHAFSAGLGGAIGYVLGGL), and 234 to 254 (VLFFFAAVIFSVSVALHLFSI). Disordered regions lie at residues 259-309 (YSPQ…VQSE) and 401-430 (KVPNGRGSPPINSLSRSKVDLKPSVTSGSM). Phosphoserine occurs at positions 442 and 472. Positions 478–505 (DLQQRQRSRHRNQSGATASSGDTESEEG) are disordered. Residues 490 to 499 (QSGATASSGD) show a composition bias toward low complexity. Residue S502 is modified to Phosphoserine. The next 6 helical transmembrane spans lie at 525–545 (LMWLCLCHLLTWFSVIAEAVF), 577–597 (MGCWGLVIYAATGAICSALLQ), 609–629 (IIYMLGTLGFSVGTAVMAMFP), 631–651 (VYVAMVTISTMGVVSMSISYC), 683–703 (ILSCQVYISQILVASALGGVV), and 709–729 (IVVIPIVASVGSFLGFLTATF). A disordered region spans residues 741–772 (KEEQKGLSSGPAGEGEGGAGSEKPTVLKLSRK). S749 bears the Phosphoserine mark.

Belongs to the glycoside-pentoside-hexuronide (GPH) cation symporter transporter (TC 2.A.2) family. Ubiquitously expressed.

It is found in the membrane. The catalysed reaction is sucrose(out) + H(+)(out) = sucrose(in) + H(+)(in). In terms of biological role, proton-associated sucrose transporter. May be able to transport also glucose and fructose. This Mus musculus (Mouse) protein is Solute carrier family 45 member 4 (Slc45a4).